The sequence spans 129 residues: Glycine cleavage system H protein (129 aa).

Residues 24-106 form the Lipoyl-binding domain; sequence TFTVGITEHA…FGDGWLFRIK (83 aa). Lys-65 is subject to N6-lipoyllysine.

The protein belongs to the GcvH family. In terms of assembly, the glycine cleavage system is composed of four proteins: P, T, L and H. It depends on (R)-lipoate as a cofactor.

In terms of biological role, the glycine cleavage system catalyzes the degradation of glycine. The H protein shuttles the methylamine group of glycine from the P protein to the T protein. The sequence is that of Glycine cleavage system H protein from Pseudoalteromonas translucida (strain TAC 125).